The chain runs to 101 residues: U-scoloptoxin(10)-Sm2a (101 aa).

An N-terminal signal peptide occupies residues Met1 to Ala23.

Belongs to the scoloptoxin-10 family. Contains 3 disulfide bonds. As to expression, expressed by the venom gland.

It is found in the secreted. In Scolopendra morsitans (Tanzanian blue ringleg centipede), this protein is U-scoloptoxin(10)-Sm2a.